The primary structure comprises 356 residues: tRNA pseudouridine synthase D (356 aa).

Residue Asp-84 is the Nucleophile of the active site. The 144-residue stretch at 159 to 302 folds into the TRUD domain; it reads GVPNYYGPQR…RRGARRPIRV (144 aa).

Belongs to the pseudouridine synthase TruD family.

The catalysed reaction is uridine(13) in tRNA = pseudouridine(13) in tRNA. Responsible for synthesis of pseudouridine from uracil-13 in transfer RNAs. The sequence is that of tRNA pseudouridine synthase D from Thermus thermophilus (strain ATCC 27634 / DSM 579 / HB8).